A 328-amino-acid polypeptide reads, in one-letter code: 2-oxoglutarate-dependent dioxygenase gloE (328 aa).

The Fe2OG dioxygenase domain occupies 170 to 271 (TRTNLTFLKY…RYTLAYFLRP (102 aa)). 3 residues coordinate Fe cation: His-194, Asp-196, and His-249. Arg-262 is a 2-oxoglutarate binding site.

It belongs to the iron/ascorbate-dependent oxidoreductase family. The cofactor is Fe(2+).

It participates in mycotoxin biosynthesis. In terms of biological role, 2-oxoglutarate-dependent dioxygenase; part of the gene cluster that mediates the biosynthesis of pneumocandins, lipohexapeptides of the echinocandin family that prevent fungal cell wall formation by non-competitive inhibition of beta-1,3-glucan synthase. The 10,12-dimethylmyristoyl side chain is synthesized by the reducing polyketide synthase gloL/GLPKS4. The thioesterase gloN/GLHYD exclusively interacts with gloL/GLPKS4 to maintain turnover of the polyketide side chain. The 10R,12S-dimethylmyristic acid is then transferred to the first thiolation domain of the nonribosomal peptide synthetase gloA/GLNRPS4 by the acyl-AMP ligase gloD/GLligase, followed by its acylation to L-ornithine to trigger elongation of the cyclic hexapeptide. L-ornithine, 4R-hydroxyl-L-proline (generated from L-proline by the dioxygenase gloF/GLOXY2), 3S-hydroxyl-L-homotyrosine (generated by gloG/GLHtyB, gloH/GLHtyA, gloI/GLHtyC, gloJ/GLHtyD and hydroxylated at C-3 by the dioxygenase gloM/GLOXY1), 3R-hydroxyl-L-glutamine (generated from L-glutamine probably by the dioxygenase gloE/GLOXY3) and 3S-hydroxyl-L-proline (generated from L-proline by the dioxygenase gloF/GLOXY2 to yield pneumocandin B0), or 3S-hydroxyl-4S-methyl-L-proline (generated from L-leucine by the dioxygenase gloC/GLOXY4 to yield pneumocandin A0) are sequentially added to the growing chain. The last C domain of gloA/GLNRPS4 is proposed to be responsible for cyclization by condensation to form the peptide bond between L-ornithine and 3S-hydroxyl-4S-methyl-L-proline (for pneumocandin A0) or 3S-hydroxyl-L-proline (for pneumocandin B0). Finally, the subsequent C-4 hydroxylation of 3S-hydroxyl-L-homotyrosine and L-ornithine dihydroxylation at C-4 and C-5 are performed by the cytochrome P450 monooxygenases gloP/GLP450-1 and gloO/GLP450-2, respectively. This Glarea lozoyensis (strain ATCC 20868 / MF5171) protein is 2-oxoglutarate-dependent dioxygenase gloE.